Here is a 453-residue protein sequence, read N- to C-terminus: Carbamoyl phosphate synthase arginine-specific small chain (453 aa).

The N-terminal 33 residues, 1–33 (MFSRLAARLPKASALNGVAARQVRNLSQPAITG), are a transit peptide targeting the mitochondrion. The tract at residues 26 to 50 (LSQPAITGSKGRNMPAREPRTTAAA) is disordered. Residues serine 97, glycine 280, and glycine 282 each contribute to the L-glutamine site. Residues 233 to 420 (HVALIDCGVK…MENVELFKSN (188 aa)) enclose the Glutamine amidotransferase type-1 domain. Residue cysteine 309 is the Nucleophile of the active site. L-glutamine contacts are provided by leucine 310, glutamine 313, asparagine 351, glycine 353, and tyrosine 354. Catalysis depends on residues histidine 393 and glutamate 395.

Belongs to the CarA family. As to quaternary structure, heterodimer composed of 2 chains; the small (or glutamine) chain promotes the hydrolysis of glutamine to ammonia, which is used by the large (or ammonia) chain to synthesize carbamoyl phosphate.

The protein resides in the mitochondrion matrix. The enzyme catalyses hydrogencarbonate + L-glutamine + 2 ATP + H2O = carbamoyl phosphate + L-glutamate + 2 ADP + phosphate + 2 H(+). It catalyses the reaction L-glutamine + H2O = L-glutamate + NH4(+). Its pathway is amino-acid biosynthesis; L-arginine biosynthesis; carbamoyl phosphate from bicarbonate: step 1/1. In terms of biological role, small subunit of the arginine-specific carbamoyl phosphate synthase (CPSase). CPSase catalyzes the formation of carbamoyl phosphate from the ammonia moiety of glutamine, carbonate, and phosphate donated by ATP, the first step of the arginine biosynthetic pathway. The small subunit (glutamine amidotransferase) binds and cleaves glutamine to supply the large subunit with the substrate ammonia. The polypeptide is Carbamoyl phosphate synthase arginine-specific small chain (arg-2) (Neurospora crassa (strain ATCC 24698 / 74-OR23-1A / CBS 708.71 / DSM 1257 / FGSC 987)).